A 136-amino-acid polypeptide reads, in one-letter code: Large ribosomal subunit protein uL22 (136 aa).

It belongs to the universal ribosomal protein uL22 family. In terms of assembly, part of the 50S ribosomal subunit.

In terms of biological role, this protein binds specifically to 23S rRNA; its binding is stimulated by other ribosomal proteins, e.g. L4, L17, and L20. It is important during the early stages of 50S assembly. It makes multiple contacts with different domains of the 23S rRNA in the assembled 50S subunit and ribosome. The globular domain of the protein is located near the polypeptide exit tunnel on the outside of the subunit, while an extended beta-hairpin is found that lines the wall of the exit tunnel in the center of the 70S ribosome. The protein is Large ribosomal subunit protein uL22 of Bacteroides thetaiotaomicron (strain ATCC 29148 / DSM 2079 / JCM 5827 / CCUG 10774 / NCTC 10582 / VPI-5482 / E50).